The chain runs to 209 residues: Protein Sxy (209 aa).

The protein belongs to the Sxy/TfoX family.

Functionally, induces low levels of natural DNA uptake by inducing transcription of the competence genes (the CRP-S regulon) required for DNA transformation. Induction of the CRP-S regulon also requires Sxy-activated promoter (CRP-S), cAMP receptor protein (CRP) and cAMP. Induces CRP-S site-containing genes which are involved in genome maintenance and transcription or encoding transposases and toxin-antitoxin pairs. This chain is Protein Sxy, found in Escherichia coli (strain K12).